Here is an 81-residue protein sequence, read N- to C-terminus: Beta-catenin-interacting protein 1 (81 aa).

S59 is modified (phosphoserine).

The protein belongs to the CTNNBIP1 family. As to quaternary structure, binds CTNNB1.

The protein resides in the cytoplasm. It is found in the nucleus. Prevents the interaction between CTNNB1 and TCF family members, and acts as a negative regulator of the Wnt signaling pathway. The polypeptide is Beta-catenin-interacting protein 1 (CTNNBIP1) (Bos taurus (Bovine)).